The primary structure comprises 230 residues: Heptaprenylglyceryl phosphate synthase (230 aa).

Lysine 12 contacts sn-glycerol 1-phosphate. Residues aspartate 14 and threonine 40 each coordinate Mg(2+). Sn-glycerol 1-phosphate contacts are provided by residues 159 to 164, glycine 189, and 209 to 210; these read YIEYSG and GD.

This sequence belongs to the GGGP/HepGP synthase family. Group I subfamily. Homodimer. Mg(2+) serves as cofactor.

The enzyme catalyses sn-glycerol 1-phosphate + all-trans-heptaprenyl diphosphate = 3-heptaprenyl-sn-glycero-1-phosphate + diphosphate. The protein operates within membrane lipid metabolism; glycerophospholipid metabolism. Functionally, prenyltransferase that catalyzes in vivo the transfer of the heptaprenyl moiety of heptaprenyl pyrophosphate (HepPP; 35 carbon atoms) to the C3 hydroxyl of sn-glycerol-1-phosphate (G1P), producing heptaprenylglyceryl phosphate (HepGP). This reaction is an ether-bond-formation step in the biosynthesis of archaea-type G1P-based membrane lipids found in Bacillales. This is Heptaprenylglyceryl phosphate synthase from Staphylococcus aureus (strain USA300).